The chain runs to 185 residues: MSEEKKDEILEQETVETKEEIKTEEAEQKTESLEEKVARLESELKESEEKFLRAYADFENMKKRLEKEKYQAIDYASEKFAKDLLTPLDTLEMALNSAKADVDANELLEKLKEGIELTLKNFITTFEKHNITKVETDGEFDPNVHNAVMQVDSAEHNSGQIVQELQKGYVLKDRLLRPSMVSIAN.

Positions 1 to 40 are disordered; sequence MSEEKKDEILEQETVETKEEIKTEEAEQKTESLEEKVARL.

This sequence belongs to the GrpE family. In terms of assembly, homodimer.

It localises to the cytoplasm. Participates actively in the response to hyperosmotic and heat shock by preventing the aggregation of stress-denatured proteins, in association with DnaK and GrpE. It is the nucleotide exchange factor for DnaK and may function as a thermosensor. Unfolded proteins bind initially to DnaJ; upon interaction with the DnaJ-bound protein, DnaK hydrolyzes its bound ATP, resulting in the formation of a stable complex. GrpE releases ADP from DnaK; ATP binding to DnaK triggers the release of the substrate protein, thus completing the reaction cycle. Several rounds of ATP-dependent interactions between DnaJ, DnaK and GrpE are required for fully efficient folding. In Aliarcobacter butzleri (strain RM4018) (Arcobacter butzleri), this protein is Protein GrpE.